The sequence spans 334 residues: Holliday junction branch migration complex subunit RuvB (334 aa).

A large ATPase domain (RuvB-L) region spans residues 4 to 186; sequence ADRLIAPISN…FGIVQRLEYY (183 aa). Residues I25, R26, G67, K70, T71, T72, 133-135, R176, Y186, and R223 each bind ATP; that span reads EDY. A Mg(2+)-binding site is contributed by T71. Positions 187-257 are small ATPAse domain (RuvB-S); the sequence is KVADLQHIVQ…TADRALNMLD (71 aa). The tract at residues 260 to 334 is head domain (RuvB-H); that stretch reads HQGFDYMDRK…RAYLHFGIEK (75 aa). DNA-binding residues include R315 and R320.

Belongs to the RuvB family. In terms of assembly, homohexamer. Forms an RuvA(8)-RuvB(12)-Holliday junction (HJ) complex. HJ DNA is sandwiched between 2 RuvA tetramers; dsDNA enters through RuvA and exits via RuvB. An RuvB hexamer assembles on each DNA strand where it exits the tetramer. Each RuvB hexamer is contacted by two RuvA subunits (via domain III) on 2 adjacent RuvB subunits; this complex drives branch migration. In the full resolvosome a probable DNA-RuvA(4)-RuvB(12)-RuvC(2) complex forms which resolves the HJ.

It localises to the cytoplasm. The catalysed reaction is ATP + H2O = ADP + phosphate + H(+). In terms of biological role, the RuvA-RuvB-RuvC complex processes Holliday junction (HJ) DNA during genetic recombination and DNA repair, while the RuvA-RuvB complex plays an important role in the rescue of blocked DNA replication forks via replication fork reversal (RFR). RuvA specifically binds to HJ cruciform DNA, conferring on it an open structure. The RuvB hexamer acts as an ATP-dependent pump, pulling dsDNA into and through the RuvAB complex. RuvB forms 2 homohexamers on either side of HJ DNA bound by 1 or 2 RuvA tetramers; 4 subunits per hexamer contact DNA at a time. Coordinated motions by a converter formed by DNA-disengaged RuvB subunits stimulates ATP hydrolysis and nucleotide exchange. Immobilization of the converter enables RuvB to convert the ATP-contained energy into a lever motion, pulling 2 nucleotides of DNA out of the RuvA tetramer per ATP hydrolyzed, thus driving DNA branch migration. The RuvB motors rotate together with the DNA substrate, which together with the progressing nucleotide cycle form the mechanistic basis for DNA recombination by continuous HJ branch migration. Branch migration allows RuvC to scan DNA until it finds its consensus sequence, where it cleaves and resolves cruciform DNA. This is Holliday junction branch migration complex subunit RuvB from Vibrio cholerae serotype O1 (strain ATCC 39315 / El Tor Inaba N16961).